Reading from the N-terminus, the 210-residue chain is Uracil phosphoribosyltransferase (210 aa).

5-phospho-alpha-D-ribose 1-diphosphate-binding positions include R78, R103, and 130–138 (DPMLATGGT). Uracil contacts are provided by residues I193 and 198–200 (GDA). D199 provides a ligand contact to 5-phospho-alpha-D-ribose 1-diphosphate.

The protein belongs to the UPRTase family. Mg(2+) is required as a cofactor.

The enzyme catalyses UMP + diphosphate = 5-phospho-alpha-D-ribose 1-diphosphate + uracil. It functions in the pathway pyrimidine metabolism; UMP biosynthesis via salvage pathway; UMP from uracil: step 1/1. Its activity is regulated as follows. Allosterically activated by GTP. Its function is as follows. Catalyzes the conversion of uracil and 5-phospho-alpha-D-ribose 1-diphosphate (PRPP) to UMP and diphosphate. The sequence is that of Uracil phosphoribosyltransferase from Xanthomonas euvesicatoria pv. vesicatoria (strain 85-10) (Xanthomonas campestris pv. vesicatoria).